The following is a 696-amino-acid chain: DNA ligase (696 aa).

NAD(+) contacts are provided by residues 36–40 (DAEYD), 85–86 (SL), and Glu-123. The N6-AMP-lysine intermediate role is filled by Lys-125. The NAD(+) site is built by Arg-146, Glu-181, Lys-319, and Lys-343. Residues Cys-437, Cys-440, Cys-455, and Cys-461 each contribute to the Zn(2+) site. Residues 618 to 696 (PEGTSLAGKT…EDGLKALLGL (79 aa)) form the BRCT domain.

The protein belongs to the NAD-dependent DNA ligase family. LigA subfamily. Mg(2+) serves as cofactor. The cofactor is Mn(2+).

It carries out the reaction NAD(+) + (deoxyribonucleotide)n-3'-hydroxyl + 5'-phospho-(deoxyribonucleotide)m = (deoxyribonucleotide)n+m + AMP + beta-nicotinamide D-nucleotide.. Functionally, DNA ligase that catalyzes the formation of phosphodiester linkages between 5'-phosphoryl and 3'-hydroxyl groups in double-stranded DNA using NAD as a coenzyme and as the energy source for the reaction. It is essential for DNA replication and repair of damaged DNA. The sequence is that of DNA ligase from Bordetella parapertussis (strain 12822 / ATCC BAA-587 / NCTC 13253).